A 348-amino-acid chain; its full sequence is Succinoglycan biosynthesis protein ExoO (348 aa).

Positions 322–348 (HSAPRAAPVTAAAERSPLGNDPRISKG) are disordered. Residues 324–334 (APRAAPVTAAA) are compositionally biased toward low complexity.

This sequence belongs to the glycosyltransferase 2 family.

The protein resides in the cytoplasm. The protein operates within glycan metabolism; exopolysaccharide biosynthesis. In terms of biological role, glycosyltransferase required for the synthesis of succinoglycan (EPS I). Needed for the addition of the fifth sugar (glucose), catalyzes the formation of a beta-1,6 linkage between the fourth and fifth sugar. This chain is Succinoglycan biosynthesis protein ExoO (exoO), found in Rhizobium meliloti (strain 1021) (Ensifer meliloti).